The chain runs to 451 residues: Heat shock factor protein (451 aa).

A DNA-binding region spans residues 12–117; sequence VPAFLAKLWT…LLENIKRKVN (106 aa). Disordered regions lie at residues 210–273 and 285–307; these read LNDS…LEAS and LTPS…PISP. Residues 232–246 show a composition bias toward polar residues; the sequence is PSSTSYPVSGFTDSS.

The protein belongs to the HSF family. Homotrimer. Exhibits temperature-dependent phosphorylation.

Its subcellular location is the nucleus. Its function is as follows. DNA-binding protein that specifically binds heat shock promoter elements (HSE) and activates transcription. This Xenopus laevis (African clawed frog) protein is Heat shock factor protein (hsf1).